Reading from the N-terminus, the 153-residue chain is Ribosome maturation factor RimP (153 aa).

The protein belongs to the RimP family.

It localises to the cytoplasm. In terms of biological role, required for maturation of 30S ribosomal subunits. In Clostridium botulinum (strain Alaska E43 / Type E3), this protein is Ribosome maturation factor RimP.